Consider the following 198-residue polypeptide: Mediator of RNA polymerase II transcription subunit 20 (198 aa).

It belongs to the Mediator complex subunit 20 family. Component of the Mediator complex.

Its subcellular location is the nucleus. Functionally, component of the Mediator complex, a coactivator involved in the regulated transcription of nearly all RNA polymerase II-dependent genes. Mediator functions as a bridge to convey information from gene-specific regulatory proteins to the basal RNA polymerase II transcription machinery. Mediator is recruited to promoters by direct interactions with regulatory proteins and serves as a scaffold for the assembly of a functional preinitiation complex with RNA polymerase II and the general transcription factors. In Caenorhabditis briggsae, this protein is Mediator of RNA polymerase II transcription subunit 20 (mdt-20).